The following is a 213-amino-acid chain: High frequency lysogenization protein HflD (213 aa).

The stretch at 79-126 (QGLNAELTRYTLSLMVLERKLSSAKGALDTLGNRINGLQRQLEHFDLQ) forms a coiled coil.

It belongs to the HflD family. As to quaternary structure, interacts with CII protein from phage lambda.

Its subcellular location is the cytoplasm. The protein localises to the cell inner membrane. Its function is as follows. Negative regulator of phage lambda lysogenization. Contributes to the degradation of the phage regulatory protein CII. Acts probably by holding CII on the membrane surface, away from the target promoters, but close to the FtsH protease. The polypeptide is High frequency lysogenization protein HflD (Escherichia coli O127:H6 (strain E2348/69 / EPEC)).